We begin with the raw amino-acid sequence, 204 residues long: Urease accessory protein UreG (204 aa).

Residue 12–19 coordinates GTP; that stretch reads GPVGSGKT.

This sequence belongs to the SIMIBI class G3E GTPase family. UreG subfamily. Homodimer. UreD, UreF and UreG form a complex that acts as a GTP-hydrolysis-dependent molecular chaperone, activating the urease apoprotein by helping to assemble the nickel containing metallocenter of UreC. The UreE protein probably delivers the nickel.

It is found in the cytoplasm. Facilitates the functional incorporation of the urease nickel metallocenter. This process requires GTP hydrolysis, probably effectuated by UreG. This chain is Urease accessory protein UreG, found in Stutzerimonas stutzeri (strain A1501) (Pseudomonas stutzeri).